An 89-amino-acid chain; its full sequence is Large ribosomal subunit protein eL31 (89 aa).

Belongs to the eukaryotic ribosomal protein eL31 family.

This Picrophilus torridus (strain ATCC 700027 / DSM 9790 / JCM 10055 / NBRC 100828 / KAW 2/3) protein is Large ribosomal subunit protein eL31.